The following is a 97-amino-acid chain: Large ribosomal subunit protein bL31 (97 aa).

Residues Lys-76 to Leu-97 form a disordered region. Over residues Gly-83–Leu-97 the composition is skewed to basic and acidic residues.

This sequence belongs to the bacterial ribosomal protein bL31 family. Type A subfamily. Part of the 50S ribosomal subunit.

Binds the 23S rRNA. The chain is Large ribosomal subunit protein bL31 from Mycoplasma pneumoniae (strain ATCC 29342 / M129 / Subtype 1) (Mycoplasmoides pneumoniae).